The sequence spans 107 residues: UPF0473 protein LACR_0139 (107 aa).

The protein belongs to the UPF0473 family.

The protein is UPF0473 protein LACR_0139 of Lactococcus lactis subsp. cremoris (strain SK11).